The sequence spans 345 residues: N-acetyl-gamma-glutamyl-phosphate reductase (345 aa).

Cys151 is an active-site residue.

This sequence belongs to the NAGSA dehydrogenase family. Type 1 subfamily.

It is found in the cytoplasm. The enzyme catalyses N-acetyl-L-glutamate 5-semialdehyde + phosphate + NADP(+) = N-acetyl-L-glutamyl 5-phosphate + NADPH + H(+). Its pathway is amino-acid biosynthesis; L-arginine biosynthesis; N(2)-acetyl-L-ornithine from L-glutamate: step 3/4. Its function is as follows. Catalyzes the NADPH-dependent reduction of N-acetyl-5-glutamyl phosphate to yield N-acetyl-L-glutamate 5-semialdehyde. The chain is N-acetyl-gamma-glutamyl-phosphate reductase from Clostridium novyi (strain NT).